A 217-amino-acid chain; its full sequence is Large ribosomal subunit protein uL3 (217 aa).

Q152 carries the N5-methylglutamine modification.

It belongs to the universal ribosomal protein uL3 family. Part of the 50S ribosomal subunit. Forms a cluster with proteins L14 and L19. Methylated by PrmB.

Its function is as follows. One of the primary rRNA binding proteins, it binds directly near the 3'-end of the 23S rRNA, where it nucleates assembly of the 50S subunit. This is Large ribosomal subunit protein uL3 from Blochmanniella pennsylvanica (strain BPEN).